A 335-amino-acid polypeptide reads, in one-letter code: Biotin synthase (335 aa).

The 224-residue stretch at 53 to 276 (VEIEGIVSVK…RTILRFAGGR (224 aa)) folds into the Radical SAM core domain. [4Fe-4S] cluster-binding residues include cysteine 66, cysteine 70, and cysteine 73. 4 residues coordinate [2Fe-2S] cluster: cysteine 109, cysteine 142, cysteine 201, and arginine 271.

It belongs to the radical SAM superfamily. Biotin synthase family. Homodimer. The cofactor is [4Fe-4S] cluster. It depends on [2Fe-2S] cluster as a cofactor.

It catalyses the reaction (4R,5S)-dethiobiotin + (sulfur carrier)-SH + 2 reduced [2Fe-2S]-[ferredoxin] + 2 S-adenosyl-L-methionine = (sulfur carrier)-H + biotin + 2 5'-deoxyadenosine + 2 L-methionine + 2 oxidized [2Fe-2S]-[ferredoxin]. The protein operates within cofactor biosynthesis; biotin biosynthesis; biotin from 7,8-diaminononanoate: step 2/2. Functionally, catalyzes the conversion of dethiobiotin (DTB) to biotin by the insertion of a sulfur atom into dethiobiotin via a radical-based mechanism. The sequence is that of Biotin synthase from Acidothermus cellulolyticus (strain ATCC 43068 / DSM 8971 / 11B).